The sequence spans 424 residues: Inhibin beta A chain (424 aa).

Residues 1 to 20 (MPLLWLRGFLLASCWIIVRS) form the signal peptide. Residues 21 to 308 (SPTPGSEGHG…EDHPHRRRRR (288 aa)) constitute a propeptide that is removed on maturation. The N-linked (GlcNAc...) asparagine glycan is linked to Asn165. The span at 264–275 (EVDGDGKKKDGS) shows a compositional bias: basic and acidic residues. Residues 264-306 (EVDGDGKKKDGSDGGLEEEKEQSHRPFLMLQARQSEDHPHRRR) are disordered. 4 cysteine pairs are disulfide-bonded: Cys312–Cys320, Cys319–Cys389, Cys348–Cys421, and Cys352–Cys423.

This sequence belongs to the TGF-beta family. As to quaternary structure, dimeric, linked by one or more disulfide bonds. Inhibin A is a dimer of alpha/INHA and beta-A/INHBA. Activin A is a homodimer of beta-A/INHBA. Activin AB is a dimer of beta-A/INHBA and beta-B/INHBB. Interacts with FST and FSTL3; these interactions prevent activin A interaction to its type II receptor. Activin A interacts with ACVR2A. Activin A interacts with BMPR2. Inhibin A interacts with ACVR1; this interaction creates a non-signaling complex (NSC) that inhibits ACVR1-mediated BMP signaling. Inhibin A interacts with ACVR2A. As to expression, uterus, ovary and liver.

Its subcellular location is the secreted. Inhibins/activins are involved in regulating a number of diverse functions such as hypothalamic and pituitary hormone secretion, gonadal hormone secretion, germ cell development and maturation, erythroid differentiation, insulin secretion, nerve cell survival, embryonic axial development or bone growth, depending on their subunit composition. In terms of biological role, activin A is a homodimer of INHBA that plays a role in several essential biological processes including embryonic development, stem cell maintenance and differentiation, haematopoiesis, cell proliferation and tissue fibrosis. Signals through type I (such as ACVR1B or ACVR1C) and type II receptors (such as ACVR2A, ACVR2B or BMPR2) which, upon ligand binding, phosphorylate SMAD2 and SMAD3 intracellular signaling mediators that form a complex with SMAD4, translocate to the nucleus and modulate gene expression. Can also activate alternative non-canonical intracellular signaling pathways including the p38 MAPK, extracellular signal-regulated kinases 1/2 (ERK1/2) and c-Jun N-terminal kinases (JNKs) to modulate cell migration and differentiation. Alternatively, promotes osteoblastic differentiation via ACVRL1-SMAD1/5/9 pathway. In addition, can engage the type I receptor ACVR1 to form an ACVR1-activin A-type II receptor non-signaling complex (NSC) that renders receptors unavailable for engagement with BMPs, hence resulting in an apparent inhibition of ACVR1-mediated BMP signaling. Functionally, inhibin A is a dimer of alpha/INHA and beta-A/INHBA that functions as a feedback regulator in the hypothalamic-pituitary-gonadal (HPG) axis. Inhibits the secretion of FSH from the anterior pituitary gland by acting on pituitary gonadotrope cells. Antagonizes activin A by binding to the proteoglycan, betaglycan, and forming a stable complex with and, thereby, sequestering type II activin receptors while excluding type I receptor. The sequence is that of Inhibin beta A chain (Inhba) from Mus musculus (Mouse).